We begin with the raw amino-acid sequence, 350 residues long: 3-dehydroquinate synthase (350 aa).

Residues 106 to 110 (GVIGD), 130 to 131 (TS), Lys143, and Lys152 each bind NAD(+). Residues Glu185, His246, and His263 each contribute to the Zn(2+) site.

It belongs to the sugar phosphate cyclases superfamily. Dehydroquinate synthase family. Co(2+) serves as cofactor. Requires Zn(2+) as cofactor. The cofactor is NAD(+).

It is found in the cytoplasm. The enzyme catalyses 7-phospho-2-dehydro-3-deoxy-D-arabino-heptonate = 3-dehydroquinate + phosphate. It functions in the pathway metabolic intermediate biosynthesis; chorismate biosynthesis; chorismate from D-erythrose 4-phosphate and phosphoenolpyruvate: step 2/7. Catalyzes the conversion of 3-deoxy-D-arabino-heptulosonate 7-phosphate (DAHP) to dehydroquinate (DHQ). In Clostridium botulinum (strain Alaska E43 / Type E3), this protein is 3-dehydroquinate synthase.